Reading from the N-terminus, the 1040-residue chain is Multidrug resistance protein MdtB (1040 aa).

12 helical membrane passes run 25-45 (LLMA…PVAA), 347-367 (LMLA…NIPA), 369-389 (IIPG…MVFL), 396-416 (LTLM…IVVI), 440-460 (IGFT…PLLF), 472-492 (FAVT…TLTP), 537-557 (WLTL…WIVI), 863-883 (LGST…VLGV), 888-908 (FIHP…ALLA), 910-930 (IIAG…LIGI), 968-988 (ILMT…STGV), and 998-1018 (IAMV…TPVI).

This sequence belongs to the resistance-nodulation-cell division (RND) (TC 2.A.6) family. MdtB subfamily. Part of a tripartite efflux system composed of MdtA, MdtB and MdtC. MdtB forms a heteromultimer with MdtC.

Its subcellular location is the cell inner membrane. The protein is Multidrug resistance protein MdtB of Salmonella newport (strain SL254).